We begin with the raw amino-acid sequence, 164 residues long: Dynein regulatory complex protein 8 (164 aa).

2 EF-hand domains span residues 16-51 (ELHK…LGCC) and 94-129 (AAED…EGEP).

Belongs to the DRC8 family. Component of the nexin-dynein regulatory complex (N-DRC).

Its subcellular location is the cytoplasm. It localises to the cytoskeleton. It is found in the flagellum axoneme. Functionally, component of the nexin-dynein regulatory complex (N-DRC), a key regulator of ciliary/flagellar motility which maintains the alignment and integrity of the distal axoneme and regulates microtubule sliding in motile axonemes. The polypeptide is Dynein regulatory complex protein 8 (Efcab2) (Mus musculus (Mouse)).